A 195-amino-acid polypeptide reads, in one-letter code: CASP-like protein 1E2 (195 aa).

At M1–P29 the chain is on the cytoplasmic side. The chain crosses the membrane as a helical span at residues F30–G50. Residues V51–A82 lie on the Extracellular side of the membrane. Residues F83 to L103 form a helical membrane-spanning segment. Topologically, residues S104–D122 are cytoplasmic. Residues L123–G143 traverse the membrane as a helical segment. Residues Y144–Q165 are Extracellular-facing. The helical transmembrane segment at V166–M186 threads the bilayer. Residues A187–H195 lie on the Cytoplasmic side of the membrane.

It belongs to the Casparian strip membrane proteins (CASP) family. Homodimer and heterodimers.

Its subcellular location is the cell membrane. The sequence is that of CASP-like protein 1E2 from Vitis vinifera (Grape).